The following is a 551-amino-acid chain: Sodium-dependent high-affinity dicarboxylate transporter 2 (551 aa).

Helical transmembrane passes span 9–29 (LIKK…LFFG), 34–54 (CLFS…PIGV), 82–102 (SIVL…TGLH), 119–139 (VMLL…SDTA), 194–214 (FCKA…TAII), 243–263 (WMVF…IILV), 347–367 (VSGV…FDPI), 417–437 (IFVG…IVIM), 449–469 (IFIP…LYLA), and 497–517 (VISM…CILI).

It belongs to the SLC13A/DASS transporter (TC 2.A.47) family. NADC subfamily.

It is found in the membrane. Functionally, high-affinity sodium-dicarboxylate cotransporter that accepts a range of tricarboxylic acid-cycle intermediates with 4-5 carbon atoms. There is no interaction with monocarboxylates. This Caenorhabditis elegans protein is Sodium-dependent high-affinity dicarboxylate transporter 2 (nac-2).